A 274-amino-acid chain; its full sequence is Putative outer membrane protein CPn_1073/CP_0776/CPj1073/CpB1118 (274 aa).

The N-terminal stretch at 1-21 is a signal peptide; sequence MRRYLFMVLALCLYRAAPLEA.

It is found in the cell outer membrane. This is Putative outer membrane protein CPn_1073/CP_0776/CPj1073/CpB1118 from Chlamydia pneumoniae (Chlamydophila pneumoniae).